The primary structure comprises 983 residues: GPI ethanolamine phosphate transferase 2, catalytic subunit (983 aa).

At 1-431 the chain is on the lumenal side; sequence MRLGSGTFAT…SLSAQVAQYD (431 aa). Asn-194 carries an N-linked (GlcNAc...) asparagine glycan. A run of 12 helical transmembrane segments spans residues 432 to 452, 471 to 491, 506 to 526, 552 to 572, 699 to 719, 721 to 741, 752 to 772, 789 to 809, 812 to 832, 879 to 899, 919 to 939, and 955 to 975; these read IYSM…LLLS, GFSL…VIVC, LAAG…VSVL, LLIL…SFVE, VLAA…CSPV, KAAL…IGSV, ISKG…ILFT, LKTV…ALLF, HNLP…KFIW, VEIP…VLWA, ACFC…VLVT, and LLYE…FTAM.

It belongs to the PIGG/PIGN/PIGO family. PIGG subfamily. Part of the ethanolamine phosphate transferase 2 complex composed by PIGG and PIGF. PIGF is required to stabilize it. Competes with PIGO for the binding of PIGF.

It localises to the endoplasmic reticulum membrane. The protein operates within glycolipid biosynthesis; glycosylphosphatidylinositol-anchor biosynthesis. Catalytic subunit of the ethanolamine phosphate transferase 2 complex that transfers an ethanolamine phosphate (EtNP) from a phosphatidylethanolamine (PE) to the 6-OH position of the second alpha-1,6-linked mannose of a 6-PEtn-alpha-D-Man-(1-&gt;2)-alpha-D-Man-(1-&gt;6)-2-PEtn-alpha-D-Man-(1-&gt;4)-alpha-D-GlcN-(1-&gt;6)-(1-radyl,2-acyl-sn-glycero-3-phospho)-2-acyl-inositol (also termed H7) intermediate to generate a 6-PEtn-alpha-D-Man-(1-&gt;2)-6-PEtn-alpha-D-Man-(1-&gt;6)-2-PEtn-alpha-D-Man-(1-&gt;4)-alpha-D-GlcN-(1-&gt;6)-(1-radyl,2-acyl-sn-glycero-3-phospho)-2-acyl-inositol (also termed H8) and participates in the eleventh step of the glycosylphosphatidylinositol-anchor biosynthesis. The chain is GPI ethanolamine phosphate transferase 2, catalytic subunit from Homo sapiens (Human).